The sequence spans 302 residues: Sulfate adenylyltransferase subunit 2 (302 aa).

The tract at residues 279 to 302 (ERQGRAIDHDQSGSMELKKRQGYF) is disordered. Residues 280 to 302 (RQGRAIDHDQSGSMELKKRQGYF) show a composition bias toward basic and acidic residues.

The protein belongs to the PAPS reductase family. CysD subfamily. In terms of assembly, heterodimer composed of CysD, the smaller subunit, and CysN.

It carries out the reaction sulfate + ATP + H(+) = adenosine 5'-phosphosulfate + diphosphate. It functions in the pathway sulfur metabolism; hydrogen sulfide biosynthesis; sulfite from sulfate: step 1/3. Functionally, with CysN forms the ATP sulfurylase (ATPS) that catalyzes the adenylation of sulfate producing adenosine 5'-phosphosulfate (APS) and diphosphate, the first enzymatic step in sulfur assimilation pathway. APS synthesis involves the formation of a high-energy phosphoric-sulfuric acid anhydride bond driven by GTP hydrolysis by CysN coupled to ATP hydrolysis by CysD. In Photobacterium profundum (strain SS9), this protein is Sulfate adenylyltransferase subunit 2.